The chain runs to 396 residues: Methionine import ATP-binding protein MetN 2 (396 aa).

The 240-residue stretch at 41-280 folds into the ABC transporter domain; the sequence is VSFELVGKVF…PRHGATRALL (240 aa). 77-84 is a binding site for ATP; it reads GRSGAGKS.

This sequence belongs to the ABC transporter superfamily. Methionine importer (TC 3.A.1.24) family. The complex is composed of two ATP-binding proteins (MetN), two transmembrane proteins (MetI) and a solute-binding protein (MetQ).

The protein localises to the cell inner membrane. The catalysed reaction is L-methionine(out) + ATP + H2O = L-methionine(in) + ADP + phosphate + H(+). It carries out the reaction D-methionine(out) + ATP + H2O = D-methionine(in) + ADP + phosphate + H(+). In terms of biological role, part of the ABC transporter complex MetNIQ involved in methionine import. Responsible for energy coupling to the transport system. This chain is Methionine import ATP-binding protein MetN 2, found in Burkholderia pseudomallei (strain 1710b).